The sequence spans 182 residues: Lipoprotein signal peptidase (182 aa).

The next 3 helical transmembrane spans lie at Val-12–Trp-32, Ala-68–Val-88, and Ile-91–Ile-111. Catalysis depends on residues Asp-127 and Asp-140. Residues Val-135–Leu-155 traverse the membrane as a helical segment.

Belongs to the peptidase A8 family.

Its subcellular location is the cell membrane. The catalysed reaction is Release of signal peptides from bacterial membrane prolipoproteins. Hydrolyzes -Xaa-Yaa-Zaa-|-(S,diacylglyceryl)Cys-, in which Xaa is hydrophobic (preferably Leu), and Yaa (Ala or Ser) and Zaa (Gly or Ala) have small, neutral side chains.. Its pathway is protein modification; lipoprotein biosynthesis (signal peptide cleavage). In terms of biological role, this protein specifically catalyzes the removal of signal peptides from prolipoproteins. The chain is Lipoprotein signal peptidase from Bifidobacterium longum subsp. infantis (strain ATCC 15697 / DSM 20088 / JCM 1222 / NCTC 11817 / S12).